An 89-amino-acid chain; its full sequence is Small ribosomal subunit protein uS17 (89 aa).

The protein belongs to the universal ribosomal protein uS17 family. Part of the 30S ribosomal subunit.

One of the primary rRNA binding proteins, it binds specifically to the 5'-end of 16S ribosomal RNA. The polypeptide is Small ribosomal subunit protein uS17 (Polynucleobacter asymbioticus (strain DSM 18221 / CIP 109841 / QLW-P1DMWA-1) (Polynucleobacter necessarius subsp. asymbioticus)).